Consider the following 89-residue polypeptide: ATP synthase subunit H, mitochondrial (89 aa).

In terms of assembly, F-type ATP synthases have 2 components, the catalytic core F(1) and the membrane-embedded component F(0), linked together by a central stalk and a peripheral stalk. The central stalk, also called rotor shaft, is often seen as part of F(1). The peripheral stalk is seen as part of F(0). F(0) contains the membrane channel next to the rotor. F-type ATP synthases form dimers but each monomer functions independently in ATP generation. The dimer consists of 18 different polypeptides: ATP1 (subunit alpha, part of F(1), 3 molecules per monomer), ATP2 (subunit beta, part of F(1), 3 molecules per monomer), ATP3 (subunit gamma, part of the central stalk), ATP4 (subunit b, part of the peripheral stalk), ATP5/OSCP (subunit 5/OSCP, part of the peripheral stalk), ATP6 (subunit a, part of the peripheral stalk), ATP7 (subunit d, part of the peripheral stalk), ATP8 (subunit 8, part of the peripheral stalk), OLI1 (subunit c, part of the rotor, 10 molecules per monomer), ATP14 (subunit H, part of the peripheral stalk), ATP15 (subunit epsilon, part of the central stalk), ATP16 (subunit delta, part of the central stalk), ATP17 (subunit f, part of the peripheral stalk), ATP18 (subunit i/j, part of the peripheral stalk). Dimer-specific subunits are ATP19 (subunit k, at interface between monomers), ATP20 (subunit g, at interface between monomers), TIM11 (subunit e, at interface between monomers). Also contains subunit L.

It is found in the mitochondrion inner membrane. Its function is as follows. Mitochondrial membrane ATP synthase (F(1)F(0) ATP synthase or Complex V) produces ATP from ADP in the presence of a proton gradient across the membrane which is generated by electron transport complexes of the respiratory chain. F-type ATP synthases consist of two structural domains, F(1) - containing the extramembraneous catalytic core, and F(0) - containing the membrane proton channel, linked together by a central stalk and a peripheral stalk. During catalysis, ATP synthesis in the catalytic domain of F(1) is coupled via a rotary mechanism of the central stalk subunits to proton translocation. Part of the peripheral stalk. In Pichia angusta (Yeast), this protein is ATP synthase subunit H, mitochondrial.